The following is a 267-amino-acid chain: Large ribosomal subunit protein uL3 (267 aa).

The disordered stretch occupies residues N124–L147.

This sequence belongs to the universal ribosomal protein uL3 family. Part of the 50S ribosomal subunit. Forms a cluster with proteins L14 and L19.

In terms of biological role, one of the primary rRNA binding proteins, it binds directly near the 3'-end of the 23S rRNA, where it nucleates assembly of the 50S subunit. The sequence is that of Large ribosomal subunit protein uL3 from Mycoplasmopsis agalactiae (strain NCTC 10123 / CIP 59.7 / PG2) (Mycoplasma agalactiae).